We begin with the raw amino-acid sequence, 244 residues long: Exosome complex component Rrp41 (244 aa).

The protein belongs to the RNase PH family. Rrp41 subfamily. As to quaternary structure, component of the archaeal exosome complex. Forms a hexameric ring-like arrangement composed of 3 Rrp41-Rrp42 heterodimers. The hexameric ring associates with a trimer of Rrp4 and/or Csl4 subunits.

It is found in the cytoplasm. Catalytic component of the exosome, which is a complex involved in RNA degradation. Has 3'-&gt;5' exoribonuclease activity. Can also synthesize heteromeric RNA-tails. In Nitrosopumilus maritimus (strain SCM1), this protein is Exosome complex component Rrp41.